The following is a 284-amino-acid chain: Proton-translocating ferredoxin:NAD(+) oxidoreductase complex subunit B (284 aa).

A hydrophobic region spans residues Met-1–Asn-26. The region spanning Glu-32–Lys-92 is the 4Fe-4S domain. [4Fe-4S] cluster-binding residues include Cys-49, Cys-52, Cys-57, Cys-75, Cys-138, Cys-142, Cys-148, Cys-152, Cys-172, Cys-175, Cys-178, Cys-182, Cys-217, Cys-220, Cys-223, Cys-227, Cys-246, Cys-249, Cys-254, and Cys-258. 4 consecutive 4Fe-4S ferredoxin-type domains span residues Gly-133 to Asn-162, Gly-163 to Val-192, Gly-206 to Asn-237, and Ala-239 to Gly-269.

This sequence belongs to the 4Fe4S bacterial-type ferredoxin family. RnfB subfamily. The complex is composed of six subunits: RnfA, RnfB, RnfC, RnfD, RnfE and RnfG. It depends on [4Fe-4S] cluster as a cofactor.

It is found in the cell membrane. Its function is as follows. Part of a membrane-bound complex that couples electron transfer with translocation of ions across the membrane. Couples electron transfer from reduced ferredoxin to NAD(+) with translocation of H(+) out of the cell. Essential for energy conservation during autotrophic growth. Contributes to ATP synthesis during heterotrophic growth. This Clostridium ljungdahlii (strain ATCC 55383 / DSM 13528 / PETC) protein is Proton-translocating ferredoxin:NAD(+) oxidoreductase complex subunit B.